We begin with the raw amino-acid sequence, 796 residues long: Probable phosphoketolase (796 aa).

This sequence belongs to the XFP family. Requires thiamine diphosphate as cofactor.

The polypeptide is Probable phosphoketolase (Synechococcus elongatus (strain ATCC 33912 / PCC 7942 / FACHB-805) (Anacystis nidulans R2)).